The chain runs to 922 residues: DNA gyrase subunit A (922 aa).

A compositionally biased stretch (low complexity) spans 1 to 14 (MTETPTDGGSTPPS). The tract at residues 1–24 (MTETPTDGGSTPPSDGGGPGGRIE) is disordered. Positions 49–518 (LPDVRDGLKP…ADGDLSMEDL (470 aa)) constitute a Topo IIA-type catalytic domain. Y137 acts as the O-(5'-phospho-DNA)-tyrosine intermediate in catalysis. A GyrA-box motif is present at residues 545 to 551 (QRRGGKG). The disordered stretch occupies residues 861 to 922 (EANGDDELDE…TEPDPGESDG (62 aa)). Acidic residues-rich tracts occupy residues 863–890 (NGDDELDELDESALDEGGAEGGEVDESA) and 912–922 (DTEPDPGESDG).

Belongs to the type II topoisomerase GyrA/ParC subunit family. In terms of assembly, heterotetramer, composed of two GyrA and two GyrB chains. In the heterotetramer, GyrA contains the active site tyrosine that forms a transient covalent intermediate with DNA, while GyrB binds cofactors and catalyzes ATP hydrolysis.

The protein localises to the cytoplasm. It carries out the reaction ATP-dependent breakage, passage and rejoining of double-stranded DNA.. Functionally, a type II topoisomerase that negatively supercoils closed circular double-stranded (ds) DNA in an ATP-dependent manner to modulate DNA topology and maintain chromosomes in an underwound state. Negative supercoiling favors strand separation, and DNA replication, transcription, recombination and repair, all of which involve strand separation. Also able to catalyze the interconversion of other topological isomers of dsDNA rings, including catenanes and knotted rings. Type II topoisomerases break and join 2 DNA strands simultaneously in an ATP-dependent manner. The sequence is that of DNA gyrase subunit A from Nocardioides sp. (strain ATCC BAA-499 / JS614).